The following is a 396-amino-acid chain: Elongation factor Tu (396 aa).

The tr-type G domain maps to 10 to 206 (KPHVNIGTIG…AVDNYIPEPE (197 aa)). The segment at 19-26 (GHVDHGKT) is G1. 19–26 (GHVDHGKT) contributes to the GTP binding site. Mg(2+) is bound at residue threonine 26. The interval 60–64 (GITIA) is G2. The interval 81–84 (DCPG) is G3. GTP is bound by residues 81 to 85 (DCPGH) and 136 to 139 (NKAD). Residues 136-139 (NKAD) are G4. The tract at residues 174 to 176 (SAL) is G5.

Belongs to the TRAFAC class translation factor GTPase superfamily. Classic translation factor GTPase family. EF-Tu/EF-1A subfamily. In terms of assembly, monomer.

It localises to the cytoplasm. The enzyme catalyses GTP + H2O = GDP + phosphate + H(+). Functionally, GTP hydrolase that promotes the GTP-dependent binding of aminoacyl-tRNA to the A-site of ribosomes during protein biosynthesis. In Geobacter sulfurreducens (strain ATCC 51573 / DSM 12127 / PCA), this protein is Elongation factor Tu.